Reading from the N-terminus, the 207-residue chain is Minor capsid protein P11 (207 aa).

Residues 7 to 23 are hydrophobic; that stretch reads VKVVAILAVLFLVYKLW. The interval 63–82 is disordered; that stretch reads ETDAEDDDIYTGETDDMYDG.

In terms of assembly, interacts with the major capsid protein.

It is found in the virion. Its function is as follows. One of the minor capsid proteins that constitute a network internal to the major capsid proteins and outside the lipid membrane. The minor capsid proteins glue and stabilize the capsomers. the p11 zip protein binds together the neighboring symmetrons. The polypeptide is Minor capsid protein P11 (Paramecium bursaria Chlorella virus 1 (PBCV-1)).